We begin with the raw amino-acid sequence, 219 residues long: MSCPRSIEIPDGSWIDWFLGIKGHEFSCRVPNEYIQDKFNLTGLEFDSQTLEVVLDPEFDNEDWDCAEEKKLYGMIHARYIVSPRGIEDMRLKYERGDFGSCPRVFCKRQKVLPVGLHDVWDKAQVKIYCPSCNNVYIPLPHNGMLDGAMFGTSFPHMFFMQLPSLIPSPPVEKYIPRIYGFQLHKKALMPPESAESPPIKVESSVSKSPSWLRNVPNF.

Residues 194–219 (SAESPPIKVESSVSKSPSWLRNVPNF) form a disordered region. Positions 204-219 (SSVSKSPSWLRNVPNF) are enriched in polar residues.

The protein belongs to the casein kinase 2 subunit beta family.

The chain is Suppressor-of-stellate-like protein (Ssl) from Drosophila melanogaster (Fruit fly).